The chain runs to 563 residues: E3 ubiquitin-protein ligase IpaH2.5 (563 aa).

Positions 1–270 are interaction with target proteins; sequence MIKSTNIQVI…PDYSGPQIFF (270 aa). LRR repeat units lie at residues 69-90, 91-115, 117-130, 131-150, 151-170, 171-195, 197-209, and 210-233; these read LQNQ…PDLP, PQIT…MLKV, HAQF…PALP, ETLE…PFLP, ENLT…PLLP, PELK…KLEG, ALAN…LPEL, and PFSM…VLRL. The interval 271–281 is linker; sequence SMGNSATISAP. The tract at residues 282–563 is E3 ubiquitin-protein ligase catalytic domain; that stretch reads EHSLADAVTA…YRQLTDEVLA (282 aa). Residues 284-563 form the NEL domain; that stretch reads SLADAVTAWF…YRQLTDEVLA (280 aa). Residue Cys-368 is the Glycyl thioester intermediate of the active site.

The protein belongs to the LRR-containing bacterial E3 ligase family. As to quaternary structure, interacts with human RBCK1/HOIL-1 and RNF31/HOIP components of the LUBAC complex. In terms of processing, ubiquitinated in the presence of host E1 ubiquitin-activating enzyme, E2 ubiquitin-conjugating enzyme and ubiquitin.

The protein localises to the secreted. It localises to the host cytoplasm. It carries out the reaction S-ubiquitinyl-[E2 ubiquitin-conjugating enzyme]-L-cysteine + [acceptor protein]-L-lysine = [E2 ubiquitin-conjugating enzyme]-L-cysteine + N(6)-ubiquitinyl-[acceptor protein]-L-lysine.. It participates in protein modification; protein ubiquitination. Exists in an autoinhibited state in the absence of substrate protein, probably due to interactions of the leucine-rich repeat domain with the catalytic domain. Is activated upon binding to a substrate protein. Functionally, E3 ubiquitin-protein ligase effector that inhibits host cell innate immunity during bacterial infection by catalyzing 'Lys-48'-linked polyubiquitination and subsequent degradation of host RNF31/HOIP. Host RNF31/HOIP is the catalytic component of the LUBAC complex, which conjugates linear ('Met-1'-linked) polyubiquitin chains at the surface of bacteria invading the host cytosol to form the ubiquitin coat surrounding bacteria. The bacterial ubiquitin coat acts as an 'eat-me' signal for xenophagy and promotes NF-kappa-B activation. The chain is E3 ubiquitin-protein ligase IpaH2.5 from Shigella flexneri.